A 95-amino-acid chain; its full sequence is MSVDLATVKRVAKLARIALPEDEAERVMGELNGILGFVEQLSEVNVDGVEPMTSVMPMAMRKRKDAVTDGGKADDIVANAPETDRHFFLVPKVVE.

It belongs to the GatC family. Heterotrimer of A, B and C subunits.

The catalysed reaction is L-glutamyl-tRNA(Gln) + L-glutamine + ATP + H2O = L-glutaminyl-tRNA(Gln) + L-glutamate + ADP + phosphate + H(+). The enzyme catalyses L-aspartyl-tRNA(Asn) + L-glutamine + ATP + H2O = L-asparaginyl-tRNA(Asn) + L-glutamate + ADP + phosphate + 2 H(+). In terms of biological role, allows the formation of correctly charged Asn-tRNA(Asn) or Gln-tRNA(Gln) through the transamidation of misacylated Asp-tRNA(Asn) or Glu-tRNA(Gln) in organisms which lack either or both of asparaginyl-tRNA or glutaminyl-tRNA synthetases. The reaction takes place in the presence of glutamine and ATP through an activated phospho-Asp-tRNA(Asn) or phospho-Glu-tRNA(Gln). The protein is Aspartyl/glutamyl-tRNA(Asn/Gln) amidotransferase subunit C of Allorhizobium ampelinum (strain ATCC BAA-846 / DSM 112012 / S4) (Agrobacterium vitis (strain S4)).